Here is a 405-residue protein sequence, read N- to C-terminus: Serpin I2 (405 aa).

Positions 1-18 are cleaved as a signal peptide; the sequence is MNKTILWSFLLFFSGSQT. Asparagine 306 carries N-linked (GlcNAc...) asparagine glycosylation.

It belongs to the serpin family. As to expression, expressed in pancreas.

It is found in the secreted. This chain is Serpin I2 (Serpini2), found in Mus musculus (Mouse).